The sequence spans 274 residues: Nitrogenase iron protein (274 aa).

8–15 (GKGGIGKS) is a binding site for ATP. Cys94 contributes to the [4Fe-4S] cluster binding site. Arg97 carries the ADP-ribosylarginine; by dinitrogenase reductase ADP-ribosyltransferase modification. Cys131 contributes to the [4Fe-4S] cluster binding site.

This sequence belongs to the NifH/BchL/ChlL family. In terms of assembly, homodimer. Requires [4Fe-4S] cluster as cofactor. The reversible ADP-ribosylation of Arg-97 inactivates the nitrogenase reductase and regulates nitrogenase activity.

It catalyses the reaction N2 + 8 reduced [2Fe-2S]-[ferredoxin] + 16 ATP + 16 H2O = H2 + 8 oxidized [2Fe-2S]-[ferredoxin] + 2 NH4(+) + 16 ADP + 16 phosphate + 6 H(+). Its function is as follows. The key enzymatic reactions in nitrogen fixation are catalyzed by the nitrogenase complex, which has 2 components: the iron protein and the molybdenum-iron protein. The chain is Nitrogenase iron protein from Chlorobium luteolum (strain DSM 273 / BCRC 81028 / 2530) (Pelodictyon luteolum).